The sequence spans 446 residues: MEKDKHSHFYNQKSDFRIEHSMLEELENKLIHSRKTERAKIQQQLAKIHNNVKKLQHQLKDVKPTPDFVEKLREMMEEIENAINTFKEEQRLIYEELIKEEKTTNNELSAISRKIDTWALGNSETEKAFRAISSKVPVDKVTPSTLPEEVLDFEKFLQQTGGRQGAWDDYDHQNFVKVRNKHKGKPTFMEEVLEHLPGKTQDEVQQHEKWYQKFLALEERKKESIQIWKTKKQQKREEIFKLKEKADNTPVLFHNKQEDNQKQKEEQRKKQKLAVEAWKKQKSIEMSMKCASQLKEEEEKEKKHQKERQRQFKLKLLLESYTQQKKEQEEFLRLEKEIREKAEKAEKRKNAADEISRFQERDLHKLELKILDRQAKEDEKSQKQRRLAKLKEKVENNVSRDPSRLYKPTKGWEERTKKIGPTGSGPLLHIPHRAIPTWRQGIQRRV.

Coiled coils occupy residues 35 to 116 and 219 to 400; these read KTER…RKID and ERKK…NVSR. 2 disordered regions span residues 253–272 and 390–430; these read FHNK…KKQK and LKEK…LLHI. A compositionally biased stretch (basic and acidic residues) spans 255–268; that stretch reads NKQEDNQKQKEEQR.

The protein resides in the cytoplasm. The protein localises to the cytoskeleton. It localises to the microtubule organizing center. Its subcellular location is the centrosome. It is found in the centriolar satellite. The polypeptide is Coiled-coil domain-containing protein 112 (CCDC112) (Homo sapiens (Human)).